The following is a 54-amino-acid chain: uncharacterized protein (54 aa).

This is an uncharacterized protein from Saccharolobus solfataricus (Sulfolobus solfataricus).